The primary structure comprises 218 residues: Probable signal peptidase I-2 (218 aa).

The Cytoplasmic segment spans residues 1–26; the sequence is MTENIVRETSKKKESPPENTWLELGK. A helical transmembrane segment spans residues 27 to 43; the sequence is TMVTAVILAIGIRTFVA. The Periplasmic segment spans residues 44-218; sequence EARYIPSSSM…ISPQTVPESR (175 aa). Active-site residues include serine 52 and lysine 100.

This sequence belongs to the peptidase S26 family.

Its subcellular location is the cell membrane. The enzyme catalyses Cleavage of hydrophobic, N-terminal signal or leader sequences from secreted and periplasmic proteins.. The sequence is that of Probable signal peptidase I-2 (lepB2) from Synechocystis sp. (strain ATCC 27184 / PCC 6803 / Kazusa).